Reading from the N-terminus, the 102-residue chain is Pole-localizer protein TmaR (102 aa).

The stretch at 7–34 (IINQARRKNKLKRELQDNQKKIRDNQKR) forms a coiled coil.

It belongs to the pole-localizer TmaR family.

It localises to the cytoplasm. Its function is as follows. Pole-localizer protein involved in the regulation of several cellular processes. This is Pole-localizer protein TmaR from Aliivibrio salmonicida (strain LFI1238) (Vibrio salmonicida (strain LFI1238)).